The sequence spans 379 residues: Chaperone protein DnaJ (379 aa).

One can recognise a J domain in the interval 5 to 70 (DYYETLEVSQ…QKRAAYDQYG (66 aa)). The CR-type zinc finger occupies 135-213 (GKSLEIKVPT…CRGQGRVEKT (79 aa)). Residues C148, C151, C165, C168, C187, C190, C201, and C204 each contribute to the Zn(2+) site. CXXCXGXG motif repeat units follow at residues 148–155 (CEPCDGSG), 165–172 (CSTCHGHG), 187–194 (CPTCSGKG), and 201–208 (CTSCRGQG).

Belongs to the DnaJ family. Homodimer. Zn(2+) is required as a cofactor.

The protein localises to the cytoplasm. Functionally, participates actively in the response to hyperosmotic and heat shock by preventing the aggregation of stress-denatured proteins and by disaggregating proteins, also in an autonomous, DnaK-independent fashion. Unfolded proteins bind initially to DnaJ; upon interaction with the DnaJ-bound protein, DnaK hydrolyzes its bound ATP, resulting in the formation of a stable complex. GrpE releases ADP from DnaK; ATP binding to DnaK triggers the release of the substrate protein, thus completing the reaction cycle. Several rounds of ATP-dependent interactions between DnaJ, DnaK and GrpE are required for fully efficient folding. Also involved, together with DnaK and GrpE, in the DNA replication of plasmids through activation of initiation proteins. The chain is Chaperone protein DnaJ from Colwellia maris.